Consider the following 497-residue polypeptide: 4,4'-diaponeurosporene oxygenase (497 aa).

Position 7 to 19 (7 to 19 (VIGGGLGGISAAI)) interacts with FAD.

This sequence belongs to the carotenoid/retinoid oxidoreductase family. CrtP subfamily. FAD serves as cofactor.

It catalyses the reaction all-trans-4,4'-diaponeurosporene + 2 AH2 + 2 O2 = 4,4'-diaponeurosporenal + 2 A + 3 H2O. It functions in the pathway carotenoid biosynthesis; staphyloxanthin biosynthesis; staphyloxanthin from farnesyl diphosphate: step 3/5. Functionally, involved in the biosynthesis of the yellow-orange carotenoid staphyloxanthin, which plays a role in the virulence via its protective function against oxidative stress. Catalyzes the oxidation of the terminal methyl side group of 4,4'-diaponeurosporene to form 4,4'-diaponeurosporen-4-al. This is 4,4'-diaponeurosporene oxygenase from Staphylococcus aureus (strain bovine RF122 / ET3-1).